Consider the following 368-residue polypeptide: UPF0284 protein Tery_1555 (368 aa).

It belongs to the UPF0284 family.

The chain is UPF0284 protein Tery_1555 from Trichodesmium erythraeum (strain IMS101).